Consider the following 106-residue polypeptide: UPF0145 protein Csac_0771 (106 aa).

This sequence belongs to the UPF0145 family.

The protein is UPF0145 protein Csac_0771 of Caldicellulosiruptor saccharolyticus (strain ATCC 43494 / DSM 8903 / Tp8T 6331).